Consider the following 280-residue polypeptide: Protease HtpX (280 aa).

2 helical membrane passes run 7 to 26 and 30 to 49; these read TFIL…GLLG and GMLV…YWYS. H129 provides a ligand contact to Zn(2+). E130 is a catalytic residue. H133 is a binding site for Zn(2+). A run of 2 helical transmembrane segments spans residues 146–166 and 178–198; these read ATIA…SMFG and VVGM…QMAI. E203 provides a ligand contact to Zn(2+).

It belongs to the peptidase M48B family. Zn(2+) serves as cofactor.

Its subcellular location is the cell inner membrane. The sequence is that of Protease HtpX from Legionella pneumophila (strain Lens).